We begin with the raw amino-acid sequence, 204 residues long: Thiamine-phosphate synthase (204 aa).

4-amino-2-methyl-5-(diphosphooxymethyl)pyrimidine contacts are provided by residues 35–39 and Asn67; that span reads QVREK. The Mg(2+) site is built by Asp68 and Asp87. Position 106 (Ser106) interacts with 4-amino-2-methyl-5-(diphosphooxymethyl)pyrimidine. A 2-[(2R,5Z)-2-carboxy-4-methylthiazol-5(2H)-ylidene]ethyl phosphate-binding site is contributed by 132-134; sequence TPT. Lys135 contacts 4-amino-2-methyl-5-(diphosphooxymethyl)pyrimidine. 2-[(2R,5Z)-2-carboxy-4-methylthiazol-5(2H)-ylidene]ethyl phosphate is bound by residues Gly163 and 183 to 184; that span reads VS.

It belongs to the thiamine-phosphate synthase family. Requires Mg(2+) as cofactor.

It carries out the reaction 2-[(2R,5Z)-2-carboxy-4-methylthiazol-5(2H)-ylidene]ethyl phosphate + 4-amino-2-methyl-5-(diphosphooxymethyl)pyrimidine + 2 H(+) = thiamine phosphate + CO2 + diphosphate. It catalyses the reaction 2-(2-carboxy-4-methylthiazol-5-yl)ethyl phosphate + 4-amino-2-methyl-5-(diphosphooxymethyl)pyrimidine + 2 H(+) = thiamine phosphate + CO2 + diphosphate. The enzyme catalyses 4-methyl-5-(2-phosphooxyethyl)-thiazole + 4-amino-2-methyl-5-(diphosphooxymethyl)pyrimidine + H(+) = thiamine phosphate + diphosphate. Its pathway is cofactor biosynthesis; thiamine diphosphate biosynthesis; thiamine phosphate from 4-amino-2-methyl-5-diphosphomethylpyrimidine and 4-methyl-5-(2-phosphoethyl)-thiazole: step 1/1. In terms of biological role, condenses 4-methyl-5-(beta-hydroxyethyl)thiazole monophosphate (THZ-P) and 2-methyl-4-amino-5-hydroxymethyl pyrimidine pyrophosphate (HMP-PP) to form thiamine monophosphate (TMP). The polypeptide is Thiamine-phosphate synthase (Vibrio campbellii (strain ATCC BAA-1116)).